Consider the following 531-residue polypeptide: Pancreatic secretory granule membrane major glycoprotein GP2 (531 aa).

Positions 1 to 21 (MVGCDLLWLAAASCVLTLVSP) are cleaved as a signal peptide. N-linked (GlcNAc...) asparagine glycosylation is present at Asn33. A beta hairpin region spans residues 34-53 (SSNLDLDCGSPDSPSSGICF). Intrachain disulfides connect Cys41–Cys52, Cys56–Cys151, Cys79–Cys169, Cys101–Cys139, Cys107–Cys174, Cys132–Cys140, Cys184–Cys194, Cys188–Cys203, Cys205–Cys235, Cys223–Cys314, and Cys255–Cys278. The interval 54 to 74 (DPCQNHTVLNDPTRSTENNDS) is D10C. Asn58 and Asn72 each carry an N-linked (GlcNAc...) asparagine glycan. In terms of domain architecture, EGF-like spans 180-224 (APKNCEITCRPEEECVFQNNNWSCVCRQDLHVSDSQSLQPLLDCG). N-linked (GlcNAc...) asparagine glycosylation occurs at Asn200. The ZP-N stretch occupies residues 222-315 (DCGDNEIKVK…FRVNVNFQCA (94 aa)). Positions 222-478 (DCGDNEIKVK…PSCSTNRLRS (257 aa)) constitute a ZP domain. Asn256 and Asn285 each carry an N-linked (GlcNAc...) asparagine glycan. Residues 316–339 (YPLDMSVSLETALQPIVSSLTVDV) form a flexible ZP-N/ZP-C linker region. Positions 340 to 351 (DGAGEFNVKMAL) are internal hydrophobic patch (IHP). Positions 340–478 (DGAGEFNVKM…PSCSTNRLRS (139 aa)) are ZP-C. Disulfide bonds link Cys395–Cys455, Cys416–Cys471, and Cys460–Cys467. The interval 485-493 (YNRVLDLGP) is external hydrophobic patch (EHP).

In terms of assembly, interacts with SYCN. Interacts with bacterial adhesin fimH. In terms of processing, N-glycosylated. Specifically expressed by M (microfold) cells which are atypical epithelial cells of the intestine.

The protein localises to the zymogen granule membrane. The protein resides in the secreted. Its subcellular location is the cell membrane. It is found in the apical cell membrane. It localises to the membrane raft. The protein localises to the endosome. Its function is as follows. Functions as an intestinal M-cell transcytotic receptor specific of type-I-piliated bacteria that participates in the mucosal immune response toward these bacteria. At the apical membrane of M-cells it binds fimH, a protein of the bacteria type I pilus tip. Internalizes bound bacteria, like E.coli and S.typhimurium, from the lumen of the intestine and delivers them, through M-cells, to the underlying organized lymphoid follicles where they are captured by antigen-presenting dendritic cells to elicit a mucosal immune response. The polypeptide is Pancreatic secretory granule membrane major glycoprotein GP2 (Mus musculus (Mouse)).